Reading from the N-terminus, the 95-residue chain is Small ribosomal subunit protein uS19 (95 aa).

The tract at residues 76–95 (PTRRFGGHADKKAKKGELKK) is disordered. Over residues 82–95 (GHADKKAKKGELKK) the composition is skewed to basic and acidic residues.

It belongs to the universal ribosomal protein uS19 family.

Functionally, protein S19 forms a complex with S13 that binds strongly to the 16S ribosomal RNA. The sequence is that of Small ribosomal subunit protein uS19 (rpsS) from Thermotoga maritima (strain ATCC 43589 / DSM 3109 / JCM 10099 / NBRC 100826 / MSB8).